The primary structure comprises 229 residues: LexA repressor (229 aa).

A DNA-binding region (H-T-H motif) is located at residues 28-48 (IREIGEALDIRSTNGVNDHLK). Catalysis depends on for autocatalytic cleavage activity residues Ser-147 and Lys-184.

The protein belongs to the peptidase S24 family. As to quaternary structure, homodimer.

It carries out the reaction Hydrolysis of Ala-|-Gly bond in repressor LexA.. In terms of biological role, represses a number of genes involved in the response to DNA damage (SOS response), including recA and lexA. In the presence of single-stranded DNA, RecA interacts with LexA causing an autocatalytic cleavage which disrupts the DNA-binding part of LexA, leading to derepression of the SOS regulon and eventually DNA repair. The polypeptide is LexA repressor (Anaeromyxobacter dehalogenans (strain 2CP-C)).